The chain runs to 351 residues: Divinyl chlorophyll a/b light-harvesting protein PcbA (351 aa).

6 helical membrane passes run 27-47 (FIAAHAAHTGLIAFWAGAFTL), 64-84 (LIALPHLATLGIGFDEAGTFV), 89-109 (VTAIAIVHLVLSMVYGAGGLL), 202-222 (VMGGHAFLAFFMITGGAFHIA), 242-262 (AILSWSLAGIGWMAIVAAFWC), and 305-325 (LTNVHYFLGFFYIQGHLWHAL).

It belongs to the PsbB/PsbC family. IsiA/Pcb subfamily. As to quaternary structure, the antenna complex consists of divinyl chlorophylls (a and b) and divinyl chlorophyll a/b binding proteins and binds more divinyl chlorophyll b than does the antenna complex from high-light-adapted Prochlorococcus. Divinyl chlorophyll a serves as cofactor. Requires divinyl chlorophyll b as cofactor.

The protein resides in the cellular thylakoid membrane. The antenna complex functions as a light receptor, it captures and delivers excitation energy to photosystems II and I. The Prochlorales pcb genes are not related to higher plant LHCs. In Prochlorococcus marinus (strain SARG / CCMP1375 / SS120), this protein is Divinyl chlorophyll a/b light-harvesting protein PcbA (pcbA).